The primary structure comprises 474 residues: Trehalose-6-phosphate synthase (474 aa).

Arg-10 lines the D-glucose 6-phosphate pocket. 22 to 23 (GG) provides a ligand contact to UDP-alpha-D-glucose. D-glucose 6-phosphate contacts are provided by Tyr-77 and Asp-131. Positions 263 and 268 each coordinate UDP-alpha-D-glucose. Position 301 (Arg-301) interacts with D-glucose 6-phosphate. UDP-alpha-D-glucose is bound by residues Phe-340 and 366-370 (LVAKE).

It belongs to the glycosyltransferase 20 family. In terms of assembly, homotetramer.

The catalysed reaction is D-glucose 6-phosphate + UDP-alpha-D-glucose = alpha,alpha-trehalose 6-phosphate + UDP + H(+). The protein operates within glycan biosynthesis; trehalose biosynthesis. Its function is as follows. Probably involved in the osmoprotection via the biosynthesis of trehalose. Catalyzes the transfer of glucose from UDP-alpha-D-glucose (UDP-Glc) to D-glucose 6-phosphate (Glc-6-P) to form trehalose-6-phosphate. Acts with retention of the anomeric configuration of the UDP-sugar donor. This chain is Trehalose-6-phosphate synthase, found in Klebsiella pneumoniae subsp. pneumoniae (strain ATCC 700721 / MGH 78578).